Consider the following 145-residue polypeptide: Ribonuclease P protein component (145 aa).

The interval proline 121 to leucine 145 is disordered. Polar residues predominate over residues histidine 134–leucine 145.

The protein belongs to the RnpA family. In terms of assembly, consists of a catalytic RNA component (M1 or rnpB) and a protein subunit.

The enzyme catalyses Endonucleolytic cleavage of RNA, removing 5'-extranucleotides from tRNA precursor.. RNaseP catalyzes the removal of the 5'-leader sequence from pre-tRNA to produce the mature 5'-terminus. It can also cleave other RNA substrates such as 4.5S RNA. The protein component plays an auxiliary but essential role in vivo by binding to the 5'-leader sequence and broadening the substrate specificity of the ribozyme. This chain is Ribonuclease P protein component, found in Xanthomonas axonopodis pv. citri (strain 306).